The following is a 346-amino-acid chain: Glucose-6-phosphatase 3 (346 aa).

Residues Met1–Asn24 are Lumenal-facing. A helical transmembrane segment spans residues Met25–Ala45. Over Ala46–Ser56 the chain is Cytoplasmic. The helical transmembrane segment at Val57–Gly77 threads the bilayer. The Lumenal portion of the chain corresponds to Asp78 to Pro108. Arg79 is a substrate binding site. Residues Gly109–Ile129 traverse the membrane as a helical segment. The active-site Proton donor is the His114. At Ser130–Arg138 the chain is on the cytoplasmic side. Residues Ser139 to Leu159 form a helical membrane-spanning segment. Residues Ser160–His167 are Lumenal-facing. Arg161 provides a ligand contact to substrate. The active-site Nucleophile is the His167. A helical transmembrane segment spans residues Phe168–Met186. Topologically, residues Ser187–Ser197 are cytoplasmic. The helical transmembrane segment at Phe198–Phe218 threads the bilayer. The Lumenal segment spans residues Thr219 to Asp254. Residues Ser255–Ile273 traverse the membrane as a helical segment. Residues Arg274–Lys283 are Cytoplasmic-facing. A helical membrane pass occupies residues Ile284–Pro304. Residues Gln305–Ser307 are Lumenal-facing. Residues Leu308 to Val328 traverse the membrane as a helical segment. Topologically, residues Pro329–Ser346 are cytoplasmic.

This sequence belongs to the glucose-6-phosphatase family. In terms of tissue distribution, widely expressed. Highly expressed in heart and testis and to a lower extent in spleen, stomach, small intestine, skeletal muscle and uterus. Expressed in muscle, brain, thymus, lung, kidney, spleen and pancreas (at protein level). In the brain, expressed in astrocytes (at protein level).

The protein localises to the endoplasmic reticulum membrane. The catalysed reaction is D-glucose 6-phosphate + H2O = D-glucose + phosphate. Its pathway is carbohydrate biosynthesis; gluconeogenesis. Inhibited by vanadate. Its function is as follows. Hydrolyzes glucose-6-phosphate to glucose in the endoplasmic reticulum. May form with the glucose-6-phosphate transporter (SLC37A4/G6PT) a ubiquitously expressed complex responsible for glucose production through glycogenolysis and gluconeogenesis. Probably required for normal neutrophil function. The polypeptide is Glucose-6-phosphatase 3 (G6pc3) (Mus musculus (Mouse)).